Reading from the N-terminus, the 154-residue chain is Periplasmic nitrate reductase, electron transfer subunit (154 aa).

An N-terminal signal peptide occupies residues 1–24 (MSMHPALRLLATVLVALGAGPAFT). The segment at 27–47 (APRLTGADRPMSEVAAPPLPE) is disordered. Heme c-binding residues include H68, C82, C85, H86, H103, C122, C125, and H126.

This sequence belongs to the NapB family. In terms of assembly, component of the periplasmic nitrate reductase NapAB complex composed of NapA and NapB. Post-translationally, binds 2 heme C groups per subunit.

Its subcellular location is the periplasm. Its function is as follows. Electron transfer subunit of the periplasmic nitrate reductase complex NapAB. Receives electrons from the membrane-anchored tetraheme c-type NapC protein and transfers these to NapA subunit, thus allowing electron flow between membrane and periplasm. Essential for periplasmic nitrate reduction with nitrate as the terminal electron acceptor. This Cereibacter sphaeroides (Rhodobacter sphaeroides) protein is Periplasmic nitrate reductase, electron transfer subunit.